The following is a 182-amino-acid chain: Adenylate kinase isoenzyme 6 homolog (182 aa).

Residues 1–20 (MATPETRRRPNILVTGSPGT) are disordered. Residues Gly-19, Gly-21, Lys-22, Ser-23, and Thr-24 each contribute to the ATP site. The tract at residues 39-62 (EVSKEVRENNLQGDFDEQYNCHVL) is NMPbind. The segment at 116 to 126 (SRGYSEFKIKE) is LID. An ATP-binding site is contributed by Arg-117.

It belongs to the adenylate kinase family. AK6 subfamily. In terms of assembly, monomer and homodimer. Interacts with small ribosomal subunit protein uS11. Not a structural component of 43S pre-ribosomes, but transiently interacts with them by binding to uS11.

The protein localises to the cytoplasm. It is found in the nucleus. The catalysed reaction is AMP + ATP = 2 ADP. It catalyses the reaction ATP + H2O = ADP + phosphate + H(+). Functionally, broad-specificity nucleoside monophosphate (NMP) kinase that catalyzes the reversible transfer of the terminal phosphate group between nucleoside triphosphates and monophosphates. Also has ATPase activity. Involved in the late cytoplasmic maturation steps of the 40S ribosomal particles, specifically 18S rRNA maturation. While NMP activity is not required for ribosome maturation, ATPase activity is. Associates transiently with small ribosomal subunit protein uS11. ATP hydrolysis breaks the interaction with uS11. May temporarily remove uS11 from the ribosome to enable a conformational change of the ribosomal RNA that is needed for the final maturation step of the small ribosomal subunit. Its NMP activity may have a role in nuclear energy homeostasis. AMP and dAMP are the preferred substrates, but CMP and TMP are also good substrates. ATP and dATP are the best phosphate donors. The sequence is that of Adenylate kinase isoenzyme 6 homolog from Caenorhabditis elegans.